We begin with the raw amino-acid sequence, 1449 residues long: Disease resistance protein RPP5 (1449 aa).

The TIR domain occupies 10–178 (RRYDVFPSFS…KISNDVSNKL (169 aa)). Residue Glu-85 is part of the active site. Residues 192–446 (EAHIEAIKSV…IACLFNGFEV (255 aa)) enclose the NB-ARC domain. LRR repeat units lie at residues 549–573 (MRNL…VYLP), 574–595 (LKLR…TFKA), 597–618 (YLVN…TLPL), 619–642 (GSLK…SNAR), 644–665 (LEEL…IQNA), 687–710 (MCNL…VYFP), 712–732 (KLRL…NFKV), 733–755 (EYLV…TQPL), 756–779 (GRLK…SLAI), 802–825 (AIKL…DLNL), 826–849 (ESLE…KMGC), 915–939 (LGSL…SKAT), 941–962 (LKHL…IGNL), 963–985 (QKLV…DVNL), 986–1011 (SSLE…SIKW), 1028–1052 (ATKL…IGNL), 1053–1077 (QNLR…NLSS), 1096–1119 (STNI…IEDF), and 1120–1143 (TRLR…IFRL).

Interacts with RSH1.

The catalysed reaction is NAD(+) + H2O = ADP-D-ribose + nicotinamide + H(+). Functionally, TIR-NB-LRR receptor-like protein that confers resistance to the pathogen Hyaloperonospora arabidopsis isolate Noco2 (downy mildew disease). Confers resistance to H.arabidopsis isolates Emoy2, Emwa1 and Noco2. The protein is Disease resistance protein RPP5 of Arabidopsis thaliana (Mouse-ear cress).